A 199-amino-acid chain; its full sequence is Nuclear transcription factor Y subunit C-2 (199 aa).

Belongs to the NFYC/HAP5 subunit family. In terms of assembly, heterotrimeric transcription factor composed of three components, NF-YA, NF-YB and NF-YC. NF-YB and NF-YC must interact and dimerize for NF-YA association and DNA binding. Interacts with HTT1 in both cytoplasm and nucleus. In terms of tissue distribution, ubiquitous.

Its subcellular location is the nucleus. The protein localises to the cytoplasm. Stimulates the transcription of various genes by recognizing and binding to a CCAAT motif in promoters. This chain is Nuclear transcription factor Y subunit C-2 (NFYC2), found in Arabidopsis thaliana (Mouse-ear cress).